The primary structure comprises 116 residues: Fluoride-specific ion channel FluC 2 (116 aa).

2 consecutive transmembrane segments (helical) span residues 3–23 (LLTA…RYAV) and 43–63 (LLFG…AVTV). The Na(+) site is built by G67 and T70. Residues 96–116 (VGTLAAALLAVFLGIALGAAL) form a helical membrane-spanning segment.

It belongs to the fluoride channel Fluc/FEX (TC 1.A.43) family.

The protein localises to the cell membrane. The enzyme catalyses fluoride(in) = fluoride(out). Its activity is regulated as follows. Na(+) is not transported, but it plays an essential structural role and its presence is essential for fluoride channel function. Its function is as follows. Fluoride-specific ion channel. Important for reducing fluoride concentration in the cell, thus reducing its toxicity. This is Fluoride-specific ion channel FluC 2 from Natronomonas pharaonis (strain ATCC 35678 / DSM 2160 / CIP 103997 / JCM 8858 / NBRC 14720 / NCIMB 2260 / Gabara) (Halobacterium pharaonis).